A 152-amino-acid polypeptide reads, in one-letter code: Large ribosomal subunit protein uL15 (152 aa).

The segment at 1 to 57 (MTSTLNTLKSNSGSRKKKLRKGRGIAAGQGASCGFGMRGQKSRSGRPTRPGFEGGQM) is disordered. Positions 14–23 (SRKKKLRKGR) are enriched in basic residues. The span at 25 to 37 (IAAGQGASCGFGM) shows a compositional bias: gly residues.

This sequence belongs to the universal ribosomal protein uL15 family. Part of the 50S ribosomal subunit.

In terms of biological role, binds to the 23S rRNA. The protein is Large ribosomal subunit protein uL15 of Prochlorococcus marinus (strain AS9601).